A 142-amino-acid chain; its full sequence is Large ribosomal subunit protein uL13 (142 aa).

Belongs to the universal ribosomal protein uL13 family. Part of the 50S ribosomal subunit.

In terms of biological role, this protein is one of the early assembly proteins of the 50S ribosomal subunit, although it is not seen to bind rRNA by itself. It is important during the early stages of 50S assembly. This is Large ribosomal subunit protein uL13 from Klebsiella pneumoniae (strain 342).